The following is a 1001-amino-acid chain: Protein MEI2-like 4 (1001 aa).

The segment at 100–120 (HANLPPSPWRPDQETGRQTDS) is disordered. RRM domains lie at 275–348 (RTLF…YSIP) and 360–433 (GTIV…TSRL). Disordered regions lie at residues 767-815 (GGPS…KKQY) and 941-1001 (FHSD…PAKD). The span at 793 to 803 (PGERMRSRRND) shows a compositional bias: basic and acidic residues. Over residues 978–994 (DISITSVNCDTSTNGVD) the composition is skewed to polar residues.

Its function is as follows. Probable RNA-binding protein that may play a role in growth regulation. This chain is Protein MEI2-like 4 (ML4), found in Oryza sativa subsp. japonica (Rice).